The following is a 215-amino-acid chain: Probable phosphoglycerate mutase GpmB (215 aa).

Residues Arg8 to Asn15, Gln21 to Gly22, Arg58, Arg60, Glu82 to Met85, Arg104 to Arg105, and Gly151 to Ile152 each bind substrate. His9 serves as the catalytic Tele-phosphohistidine intermediate. Glu82 serves as the catalytic Proton donor/acceptor.

The protein belongs to the phosphoglycerate mutase family. GpmB subfamily.

It carries out the reaction (2R)-2-phosphoglycerate = (2R)-3-phosphoglycerate. The protein operates within carbohydrate degradation; glycolysis; pyruvate from D-glyceraldehyde 3-phosphate: step 3/5. This Shigella dysenteriae serotype 1 (strain Sd197) protein is Probable phosphoglycerate mutase GpmB.